The following is a 462-amino-acid chain: Prenyltransferase phqI (462 aa).

Glutamate 101 contributes to the brevianamide F binding site. Residues arginine 117, lysine 204, tyrosine 206, lysine 273, tyrosine 275, tyrosine 357, tyrosine 442, and tyrosine 446 each coordinate dimethylallyl diphosphate.

This sequence belongs to the tryptophan dimethylallyltransferase family.

The protein operates within alkaloid biosynthesis. In terms of biological role, prenyltransferase; part of the gene cluster that mediates the biosynthesis of paraherquamide, a fungal indole alkaloid that belongs to a family of natural products containing a characteristic bicyclo[2.2.2]diazaoctane core. The first steps in the biosynthesis of paraherquamide is the production of the beta-methyl-proline precursor from L-isoleucine. They require oxidation of a terminally hydroxylated L-isoleucine to the corresponding aldehyde by enzymes which have still to be identified. Spontaneous cyclization and dehydration would yield the 4-methyl pyrolline-5-carboxylic acid, which is then reduced by the pyrroline-5-carboxylate reductase phqD leading to the beta-methyl-proline precursor. The next step of paraherquamide biosynthesis involves coupling of beta-methyl-proline and L-tryptophan by the bimodular NRPS phqB, to produce a monooxopiperazine intermediate. The reductase (R) domain of phqB utilizes NADPH for hydride transfer to reduce the thioester bond of the T domain-tethered linear dipeptide to a hemithioaminal intermediate, which spontaneously cleaves the C-S bond to release the aldehyde product. This compound undergoes spontaneous cyclization and dehydration to give a dienamine which is reverse prenylated at C-2 by the reverse prenyltransferase phqJ. The other prenyltransferase present in the cluster, phqI may be a redundant gene in the pathway. During biosynthetic assembly, the key step to produce the polycyclic core is catalyzed by the bifunctional reductase and intramolecular [4+2] Diels-Alderase, phqE, resulting in formation of the [2.2.2] diazaoctane intermediate preparaherquamide. Following formation of preparaherquamide, an indole 2,3-epoxidation-initiated pinacol-like rearrangement is catalyzed by the phqK FAD-dependent monooxygenase. The prenyltransferase phqA, the cytochrome P450 monooxygenase phqL, and the FAD-linked oxidoreductase phqH (or the cytochrome P450 monooxygenase phqM), are proposed to be involved in the formation of the pyran ring. The FAD-dependent monooxygenase phqK is likely responsible for generation of the spiro-oxindole, and the N-methylation is likely mediated by the phqN methyltransferase leading to the isolable natural product paraherquamide F. However, the order of these biosynthetic steps has still to be determined. In late-stage paraherquamide biosynthesis, the third P450 monooxygenase, phqO, is probably responsible for the C-14 hydroxylation, transforming paraherquamide F to paraherquamide G, and paraherquamide E to the final product paraherquamide A. The expansion from the 6-membered ring pyran (in paraherquamides F and G) to the 7-membered dioxepin ring (in paraherquamides A and E) represents a poorly understood but intriguing process that probably involves the 2-oxoglutarate-dependent dioxygenase phqC. Finally, the remaining members of the paraherquamide cluster, including phqI as well as phqM (or phqH), do not have a clearly prescribed role and appear to be redundant. The polypeptide is Prenyltransferase phqI (Penicillium fellutanum).